Here is an 88-residue protein sequence, read N- to C-terminus: Apolipoprotein C-I (88 aa).

The first 26 residues, 1–26 (MRLFISLPVLIVVLAMALEGPAPAQA), serve as a signal peptide directing secretion.

This sequence belongs to the apolipoprotein C1 family.

The protein localises to the secreted. Functionally, inhibitor of lipoprotein binding to the low density lipoprotein (LDL) receptor, LDL receptor-related protein, and very low density lipoprotein (VLDL) receptor. Associates with high density lipoproteins (HDL) and the triacylglycerol-rich lipoproteins in the plasma and makes up about 10% of the protein of the VLDL and 2% of that of HDL. Appears to interfere directly with fatty acid uptake and is also the major plasma inhibitor of cholesteryl ester transfer protein (CETP). Modulates the interaction of APOE with beta-migrating VLDL and inhibits binding of beta-VLDL to the LDL receptor-related protein. Binds free fatty acids and reduces their intracellular esterification. The sequence is that of Apolipoprotein C-I (APOC1) from Myodes glareolus (Bank vole).